The sequence spans 529 residues: Mitochondrial inner membrane magnesium transporter MIT1 (529 aa).

2 coiled-coil regions span residues 336–388 and 416–450; these read KIQL…LKNE and LLET…LNLD. A helical membrane pass occupies residues 456 to 476; the sequence is FILLNAKISFSTLFCSICAVI. Residues 477–492 are Mitochondrial intermembrane-facing; it reads TSLFGMNLKNFIEHND. A helical transmembrane segment spans residues 493–513; it reads YAFFIVSIFITSWSIVGIYFT. Over 514–529 the chain is Mitochondrial matrix; the sequence is KNINTLLRFFDKYNVK.

The protein belongs to the CorA metal ion transporter (MIT) (TC 1.A.35) family.

It is found in the mitochondrion inner membrane. Functionally, mitochondrial inner membrane magnesium transporter required for mitochondrial magnesium homeostasis. Involved in the development of the sporozoite in the mosquito vector midgut. The sequence is that of Mitochondrial inner membrane magnesium transporter MIT1 from Plasmodium falciparum (isolate 3D7).